A 65-amino-acid polypeptide reads, in one-letter code: Large ribosomal subunit protein bL35 (65 aa).

Belongs to the bacterial ribosomal protein bL35 family.

This is Large ribosomal subunit protein bL35 from Photorhabdus laumondii subsp. laumondii (strain DSM 15139 / CIP 105565 / TT01) (Photorhabdus luminescens subsp. laumondii).